The following is a 303-amino-acid chain: tRNA pseudouridine synthase B (303 aa).

Catalysis depends on D46, which acts as the Nucleophile.

The protein belongs to the pseudouridine synthase TruB family. Type 1 subfamily.

It carries out the reaction uridine(55) in tRNA = pseudouridine(55) in tRNA. In terms of biological role, responsible for synthesis of pseudouridine from uracil-55 in the psi GC loop of transfer RNAs. This Hydrogenovibrio crunogenus (strain DSM 25203 / XCL-2) (Thiomicrospira crunogena) protein is tRNA pseudouridine synthase B.